Consider the following 170-residue polypeptide: Crossover junction endodeoxyribonuclease RuvC (170 aa).

Catalysis depends on residues Asp8, Glu67, and Asp139. Residues Asp8, Glu67, and Asp139 each coordinate Mg(2+).

It belongs to the RuvC family. In terms of assembly, homodimer which binds Holliday junction (HJ) DNA. The HJ becomes 2-fold symmetrical on binding to RuvC with unstacked arms; it has a different conformation from HJ DNA in complex with RuvA. In the full resolvosome a probable DNA-RuvA(4)-RuvB(12)-RuvC(2) complex forms which resolves the HJ. The cofactor is Mg(2+).

Its subcellular location is the cytoplasm. It carries out the reaction Endonucleolytic cleavage at a junction such as a reciprocal single-stranded crossover between two homologous DNA duplexes (Holliday junction).. Functionally, the RuvA-RuvB-RuvC complex processes Holliday junction (HJ) DNA during genetic recombination and DNA repair. Endonuclease that resolves HJ intermediates. Cleaves cruciform DNA by making single-stranded nicks across the HJ at symmetrical positions within the homologous arms, yielding a 5'-phosphate and a 3'-hydroxyl group; requires a central core of homology in the junction. The consensus cleavage sequence is 5'-(A/T)TT(C/G)-3'. Cleavage occurs on the 3'-side of the TT dinucleotide at the point of strand exchange. HJ branch migration catalyzed by RuvA-RuvB allows RuvC to scan DNA until it finds its consensus sequence, where it cleaves and resolves the cruciform DNA. In Pectobacterium atrosepticum (strain SCRI 1043 / ATCC BAA-672) (Erwinia carotovora subsp. atroseptica), this protein is Crossover junction endodeoxyribonuclease RuvC.